Consider the following 111-residue polypeptide: Large ribosomal subunit protein uL24 (111 aa).

Belongs to the universal ribosomal protein uL24 family. As to quaternary structure, part of the 50S ribosomal subunit.

In terms of biological role, one of two assembly initiator proteins, it binds directly to the 5'-end of the 23S rRNA, where it nucleates assembly of the 50S subunit. Its function is as follows. One of the proteins that surrounds the polypeptide exit tunnel on the outside of the subunit. The polypeptide is Large ribosomal subunit protein uL24 (Chlamydia trachomatis serovar A (strain ATCC VR-571B / DSM 19440 / HAR-13)).